The chain runs to 305 residues: Tyrosine recombinase XerC (305 aa).

Residues 4–95 (TSIQALINKW…AVKNFYRFLE (92 aa)) enclose the Core-binding (CB) domain. Residues 116–298 (LLPKALSEDD…SIKHLEAVYT (183 aa)) enclose the Tyr recombinase domain. Active-site residues include R159, K182, H250, R253, and H276. Y285 (O-(3'-phospho-DNA)-tyrosine intermediate) is an active-site residue.

The protein belongs to the 'phage' integrase family. XerC subfamily. In terms of assembly, forms a cyclic heterotetrameric complex composed of two molecules of XerC and two molecules of XerD.

The protein resides in the cytoplasm. Its function is as follows. Site-specific tyrosine recombinase, which acts by catalyzing the cutting and rejoining of the recombining DNA molecules. The XerC-XerD complex is essential to convert dimers of the bacterial chromosome into monomers to permit their segregation at cell division. It also contributes to the segregational stability of plasmids. This is Tyrosine recombinase XerC from Rickettsia africae (strain ESF-5).